The primary structure comprises 291 residues: ATP synthase gamma chain (291 aa).

It belongs to the ATPase gamma chain family. In terms of assembly, F-type ATPases have 2 components, CF(1) - the catalytic core - and CF(0) - the membrane proton channel. CF(1) has five subunits: alpha(3), beta(3), gamma(1), delta(1), epsilon(1). CF(0) has three main subunits: a, b and c.

The protein localises to the cell inner membrane. Produces ATP from ADP in the presence of a proton gradient across the membrane. The gamma chain is believed to be important in regulating ATPase activity and the flow of protons through the CF(0) complex. This chain is ATP synthase gamma chain, found in Neisseria gonorrhoeae (strain NCCP11945).